Reading from the N-terminus, the 284-residue chain is 4-diphosphocytidyl-2-C-methyl-D-erythritol kinase (284 aa).

The active site involves Lys14. An ATP-binding site is contributed by 98-108; that stretch reads PMGGGLGGGSS. The active site involves Asp140.

This sequence belongs to the GHMP kinase family. IspE subfamily.

The enzyme catalyses 4-CDP-2-C-methyl-D-erythritol + ATP = 4-CDP-2-C-methyl-D-erythritol 2-phosphate + ADP + H(+). Its pathway is isoprenoid biosynthesis; isopentenyl diphosphate biosynthesis via DXP pathway; isopentenyl diphosphate from 1-deoxy-D-xylulose 5-phosphate: step 3/6. In terms of biological role, catalyzes the phosphorylation of the position 2 hydroxy group of 4-diphosphocytidyl-2C-methyl-D-erythritol. The sequence is that of 4-diphosphocytidyl-2-C-methyl-D-erythritol kinase from Shewanella baltica (strain OS223).